The following is a 455-amino-acid chain: Glutamyl-tRNA reductase (455 aa).

Substrate contacts are provided by residues 49-52 (TCNR), serine 109, 114-116 (ETQ), and glutamine 120. Cysteine 50 (nucleophile) is an active-site residue. Position 189-194 (189-194 (GAGKMG)) interacts with NADP(+).

Belongs to the glutamyl-tRNA reductase family. In terms of assembly, homodimer.

The enzyme catalyses (S)-4-amino-5-oxopentanoate + tRNA(Glu) + NADP(+) = L-glutamyl-tRNA(Glu) + NADPH + H(+). It functions in the pathway porphyrin-containing compound metabolism; protoporphyrin-IX biosynthesis; 5-aminolevulinate from L-glutamyl-tRNA(Glu): step 1/2. In terms of biological role, catalyzes the NADPH-dependent reduction of glutamyl-tRNA(Glu) to glutamate 1-semialdehyde (GSA). This chain is Glutamyl-tRNA reductase, found in Geobacillus thermodenitrificans (strain NG80-2).